Reading from the N-terminus, the 141-residue chain is Large ribosomal subunit protein uL11 (141 aa).

The protein belongs to the universal ribosomal protein uL11 family. As to quaternary structure, part of the ribosomal stalk of the 50S ribosomal subunit. Interacts with L10 and the large rRNA to form the base of the stalk. L10 forms an elongated spine to which L12 dimers bind in a sequential fashion forming a multimeric L10(L12)X complex. One or more lysine residues are methylated.

Functionally, forms part of the ribosomal stalk which helps the ribosome interact with GTP-bound translation factors. This is Large ribosomal subunit protein uL11 from Streptococcus sanguinis (strain SK36).